The sequence spans 269 residues: GTP cyclohydrolase FolE2 (269 aa).

It belongs to the GTP cyclohydrolase IV family.

It catalyses the reaction GTP + H2O = 7,8-dihydroneopterin 3'-triphosphate + formate + H(+). The protein operates within cofactor biosynthesis; 7,8-dihydroneopterin triphosphate biosynthesis; 7,8-dihydroneopterin triphosphate from GTP: step 1/1. In terms of biological role, converts GTP to 7,8-dihydroneopterin triphosphate. The chain is GTP cyclohydrolase FolE2 from Burkholderia ambifaria (strain ATCC BAA-244 / DSM 16087 / CCUG 44356 / LMG 19182 / AMMD) (Burkholderia cepacia (strain AMMD)).